Consider the following 357-residue polypeptide: DNA integrity scanning protein DisA (357 aa).

Positions 8–146 constitute a DAC domain; sequence VKSMINILQL…GNLRYTLKDI (139 aa). ATP contacts are provided by residues glycine 75, leucine 93, and 106-110; that span reads MRHRT.

This sequence belongs to the DisA family. As to quaternary structure, homooctamer. Mg(2+) serves as cofactor.

It catalyses the reaction 2 ATP = 3',3'-c-di-AMP + 2 diphosphate. Functionally, participates in a DNA-damage check-point that is active prior to asymmetric division when DNA is damaged. DisA forms globular foci that rapidly scan along the chromosomes during sporulation, searching for lesions. When a lesion is present, DisA pauses at the lesion site. This triggers a cellular response that culminates in a temporary block in sporulation initiation. Also has diadenylate cyclase activity, catalyzing the condensation of 2 ATP molecules into cyclic di-AMP (c-di-AMP). c-di-AMP acts as a signaling molecule that couples DNA integrity with progression of sporulation. The rise in c-di-AMP level generated by DisA while scanning the chromosome, operates as a positive signal that advances sporulation; upon encountering a lesion, the DisA focus arrests at the damaged site and halts c-di-AMP synthesis. In Bacillus cereus (strain G9842), this protein is DNA integrity scanning protein DisA.